A 540-amino-acid chain; its full sequence is Phosphoenolpyruvate carboxykinase (ATP) (540 aa).

Arg-65 serves as a coordination point for substrate. Lys-87 is modified (N6-acetyllysine). Positions 207 and 213 each coordinate substrate. ATP-binding positions include Lys-213, His-232, and 248 to 256 (GLSGTGKTT). Mn(2+)-binding residues include Lys-213 and His-232. Asp-269 is a binding site for Mn(2+). ATP-binding positions include Glu-297, Arg-333, 449 to 450 (RI), and Thr-455. Arg-333 serves as a coordination point for substrate. Lys-523 carries the post-translational modification N6-acetyllysine.

It belongs to the phosphoenolpyruvate carboxykinase (ATP) family. In terms of assembly, monomer. Mn(2+) is required as a cofactor.

It localises to the cytoplasm. The enzyme catalyses oxaloacetate + ATP = phosphoenolpyruvate + ADP + CO2. It participates in carbohydrate biosynthesis; gluconeogenesis. In terms of biological role, involved in the gluconeogenesis. Catalyzes the conversion of oxaloacetate (OAA) to phosphoenolpyruvate (PEP) through direct phosphoryl transfer between the nucleoside triphosphate and OAA. In Escherichia coli O6:H1 (strain CFT073 / ATCC 700928 / UPEC), this protein is Phosphoenolpyruvate carboxykinase (ATP).